Reading from the N-terminus, the 354-residue chain is Holliday junction branch migration complex subunit RuvB (354 aa).

Positions 1-183 (MTGDNLVSAY…FGFVAHLDFY (183 aa)) are large ATPase domain (RuvB-L). ATP-binding positions include Arg23, Gly64, Lys67, Thr68, Ser69, 130-132 (EDF), Arg173, Tyr183, and Arg220. Thr68 provides a ligand contact to Mg(2+). Residues 184–254 (SPADLETLLN…TAQAALTVYD (71 aa)) form a small ATPAse domain (RuvB-S) region. The interval 257-354 (ALGLDRLDRA…DLFSVEPDQP (98 aa)) is head domain (RuvB-H). Arg312 and Arg317 together coordinate DNA.

It belongs to the RuvB family. As to quaternary structure, homohexamer. Forms an RuvA(8)-RuvB(12)-Holliday junction (HJ) complex. HJ DNA is sandwiched between 2 RuvA tetramers; dsDNA enters through RuvA and exits via RuvB. An RuvB hexamer assembles on each DNA strand where it exits the tetramer. Each RuvB hexamer is contacted by two RuvA subunits (via domain III) on 2 adjacent RuvB subunits; this complex drives branch migration. In the full resolvosome a probable DNA-RuvA(4)-RuvB(12)-RuvC(2) complex forms which resolves the HJ.

It is found in the cytoplasm. The catalysed reaction is ATP + H2O = ADP + phosphate + H(+). The RuvA-RuvB-RuvC complex processes Holliday junction (HJ) DNA during genetic recombination and DNA repair, while the RuvA-RuvB complex plays an important role in the rescue of blocked DNA replication forks via replication fork reversal (RFR). RuvA specifically binds to HJ cruciform DNA, conferring on it an open structure. The RuvB hexamer acts as an ATP-dependent pump, pulling dsDNA into and through the RuvAB complex. RuvB forms 2 homohexamers on either side of HJ DNA bound by 1 or 2 RuvA tetramers; 4 subunits per hexamer contact DNA at a time. Coordinated motions by a converter formed by DNA-disengaged RuvB subunits stimulates ATP hydrolysis and nucleotide exchange. Immobilization of the converter enables RuvB to convert the ATP-contained energy into a lever motion, pulling 2 nucleotides of DNA out of the RuvA tetramer per ATP hydrolyzed, thus driving DNA branch migration. The RuvB motors rotate together with the DNA substrate, which together with the progressing nucleotide cycle form the mechanistic basis for DNA recombination by continuous HJ branch migration. Branch migration allows RuvC to scan DNA until it finds its consensus sequence, where it cleaves and resolves cruciform DNA. This Salinispora tropica (strain ATCC BAA-916 / DSM 44818 / JCM 13857 / NBRC 105044 / CNB-440) protein is Holliday junction branch migration complex subunit RuvB.